Consider the following 331-residue polypeptide: MLDIAMPKLECVAAAENYGRFKIEPLDPGYGHTLGNALRRVLLSSIPGAAVIKIKIDGIFHEFSPIQGVREDATEIVLNVKGIRLRSYAERPVKMILSKTGPGVVRASDIECPSNVEIVNPDHYIATLDSSDARLDMELTVERHRGYLPAENRDPVPIGEIPVDAIFTPVHKVNYVVEHTRIGGMTDFDRLLLEIWTDGTVKPGDALSYAAQVLVQYSSIIADFNRFDDEQEQVGDANGLVIPSEIYDMPIEDLDLSTRTYNCLKRADITKVGQVLEMDEKQLLAVRNLGQKSMDEIREKLIERNLLPTLPFNSAILNTNVAARLNDGSAE.

The segment at 1–225 (MLDIAMPKLE…QYSSIIADFN (225 aa)) is alpha N-terminal domain (alpha-NTD). Positions 243 to 331 (PSEIYDMPIE…AARLNDGSAE (89 aa)) are alpha C-terminal domain (alpha-CTD).

It belongs to the RNA polymerase alpha chain family. Homodimer. The RNAP catalytic core consists of 2 alpha, 1 beta, 1 beta' and 1 omega subunit. When a sigma factor is associated with the core the holoenzyme is formed, which can initiate transcription.

The enzyme catalyses RNA(n) + a ribonucleoside 5'-triphosphate = RNA(n+1) + diphosphate. Functionally, DNA-dependent RNA polymerase catalyzes the transcription of DNA into RNA using the four ribonucleoside triphosphates as substrates. This is DNA-directed RNA polymerase subunit alpha from Herpetosiphon aurantiacus (strain ATCC 23779 / DSM 785 / 114-95).